The primary structure comprises 210 residues: Large ribosomal subunit protein uL4 (210 aa).

The interval 57–78 (VSGGGAKPWKQKGTGRARAGSN) is disordered.

The protein belongs to the universal ribosomal protein uL4 family. In terms of assembly, part of the 50S ribosomal subunit.

Its function is as follows. One of the primary rRNA binding proteins, this protein initially binds near the 5'-end of the 23S rRNA. It is important during the early stages of 50S assembly. It makes multiple contacts with different domains of the 23S rRNA in the assembled 50S subunit and ribosome. Functionally, forms part of the polypeptide exit tunnel. This chain is Large ribosomal subunit protein uL4, found in Desulfovibrio desulfuricans (strain ATCC 27774 / DSM 6949 / MB).